The following is a 178-amino-acid chain: Large ribosomal subunit protein uL6 (178 aa).

Belongs to the universal ribosomal protein uL6 family. In terms of assembly, part of the 50S ribosomal subunit.

This protein binds to the 23S rRNA, and is important in its secondary structure. It is located near the subunit interface in the base of the L7/L12 stalk, and near the tRNA binding site of the peptidyltransferase center. The polypeptide is Large ribosomal subunit protein uL6 (Streptococcus mutans serotype c (strain ATCC 700610 / UA159)).